The sequence spans 173 residues: Photosystem I assembly protein Ycf3 (173 aa).

TPR repeat units lie at residues 35 to 68 (AYIYYRDGLAAQNNGDYSEALEYYKESLLLEENK), 72 to 105 (GETLKNMAIIFMSNGEEDLSIETYEKALVENPKQ), and 120 to 153 (GRNAEQNGDLDQRDIWFDKAAEVWTKAVKLYPGG).

It belongs to the Ycf3 family.

The protein localises to the cellular thylakoid membrane. Functionally, essential for the assembly of the photosystem I (PSI) complex. May act as a chaperone-like factor to guide the assembly of the PSI subunits. This chain is Photosystem I assembly protein Ycf3, found in Prochlorococcus marinus (strain MIT 9312).